A 302-amino-acid chain; its full sequence is Putative receptor-like protein 16 (302 aa).

LRR repeat units lie at residues 1–19 (MNLT…LGNM), 20–43 (EMIE…FLKG), and 45–70 (DSLI…NFFS). An LRR 4; degenerate repeat occupies 72–91 (LELSMDNNLFTGKIGRGLQS). 7 LRR repeats span residues 92–115 (LRSL…WFDQ), 116–140 (LQDL…LFNM), 142–164 (SLQL…ISGY), 166–188 (ALKV…LLGK), 190–211 (IIVL…INTQ), 213–234 (IRIL…LCAV), and 235–258 (RSIH…LRNA).

The protein belongs to the RLP family.

In Arabidopsis thaliana (Mouse-ear cress), this protein is Putative receptor-like protein 16.